We begin with the raw amino-acid sequence, 880 residues long: Valine--tRNA ligase (880 aa).

A 'HIGH' region motif is present at residues 49-59 (PNVTGRLHLGH). Positions 525-529 (KMSKS) match the 'KMSKS' region motif. Lys528 is an ATP binding site. Positions 809–879 (LEGLINIDEE…AVQKRMAELK (71 aa)) form a coiled coil.

The protein belongs to the class-I aminoacyl-tRNA synthetase family. ValS type 1 subfamily. In terms of assembly, monomer.

The protein localises to the cytoplasm. The enzyme catalyses tRNA(Val) + L-valine + ATP = L-valyl-tRNA(Val) + AMP + diphosphate. Its function is as follows. As ValRS can inadvertently accommodate and process structurally similar amino acids such as threonine, to avoid such errors, it has a 'posttransfer' editing activity that hydrolyzes mischarged Thr-tRNA(Val) in a tRNA-dependent manner. Catalyzes the attachment of valine to tRNA(Val). The sequence is that of Valine--tRNA ligase from Bacillus subtilis (strain 168).